Consider the following 238-residue polypeptide: Lipid transferase CIDEC (238 aa).

Residues 1–35 (MDYAMKSLSLLYPRSLSRHVAVSTAVVTQQLVSEP) form a required for liquid-liquid phase separation (LLPS) region. In terms of domain architecture, CIDE-N spans 41–118 (RARPCRVSTA…VLQKGQKWKS (78 aa)).

The protein belongs to the CIDE family. As to quaternary structure, homodimer. Interacts with CIDEA. Homooligomer; undergoes liquid-liquid phase separation (LLPS) via its N-terminus, facilitating lipid droplet fusion, occurs at the lipid droplet contact sites. Interacts with PLIN1. Interacts with NFAT5; this interaction is direct and retains NFAT5 in the cytoplasm. Interacts with CEBPB. Interacts with isoform CLSTN3beta of CLSTN3; inhibiting the lipid transferase activity of CIDEC. Ubiquitinated and targeted to proteasomal degradation, resulting in a short half-life (about 15 minutes in 3T3-L1 cells). Protein stability depends on triaclyglycerol synthesis, fatty acid availability and lipid droplet formation.

It is found in the lipid droplet. Its subcellular location is the endoplasmic reticulum. The protein localises to the nucleus. The catalysed reaction is a triacyl-sn-glycerol(in) = a triacyl-sn-glycerol(out). Lipid transferase specifically expressed in white adipose tissue, which promotes unilocular lipid droplet formation by mediating lipid droplet fusion. Lipid droplet fusion promotes their enlargement, restricting lipolysis and favoring lipid storage. Localizes on the lipid droplet surface, at focal contact sites between lipid droplets, and mediates atypical lipid droplet fusion by undergoing liquid-liquid phase separation (LLPS) and promoting directional net neutral lipid transfer from the smaller to larger lipid droplets. The transfer direction may be driven by the internal pressure difference between the contacting lipid droplet pair. Its role in neutral lipid transfer and lipid droplet enlargement is activated by the interaction with PLIN1. May also act as a CEBPB coactivator in the white adipose tissue to control the expression of a subset of CEBPB downstream target genes, including SOCS1, SOCS3, TGFB1, TGFBR1, ID2 and XDH. When overexpressed in preadipocytes, induces apoptosis or increases cell susceptibility to apoptosis induced by serum deprivation or TGFB treatment. The chain is Lipid transferase CIDEC from Rattus norvegicus (Rat).